The following is a 486-amino-acid chain: UDP-N-acetylmuramate--L-alanine ligase (486 aa).

126-132 (GTHGKTS) provides a ligand contact to ATP.

Belongs to the MurCDEF family.

The protein localises to the cytoplasm. It catalyses the reaction UDP-N-acetyl-alpha-D-muramate + L-alanine + ATP = UDP-N-acetyl-alpha-D-muramoyl-L-alanine + ADP + phosphate + H(+). The protein operates within cell wall biogenesis; peptidoglycan biosynthesis. Cell wall formation. The polypeptide is UDP-N-acetylmuramate--L-alanine ligase (Corynebacterium glutamicum (strain ATCC 13032 / DSM 20300 / JCM 1318 / BCRC 11384 / CCUG 27702 / LMG 3730 / NBRC 12168 / NCIMB 10025 / NRRL B-2784 / 534)).